We begin with the raw amino-acid sequence, 301 residues long: UDP-N-acetylenolpyruvoylglucosamine reductase (301 aa).

Positions 30–194 (VGGEADYLVF…LSVKFALAPG (165 aa)) constitute an FAD-binding PCMH-type domain. The active site involves Arg173. Ser223 acts as the Proton donor in catalysis. Glu293 is an active-site residue.

This sequence belongs to the MurB family. FAD serves as cofactor.

The protein resides in the cytoplasm. It catalyses the reaction UDP-N-acetyl-alpha-D-muramate + NADP(+) = UDP-N-acetyl-3-O-(1-carboxyvinyl)-alpha-D-glucosamine + NADPH + H(+). It functions in the pathway cell wall biogenesis; peptidoglycan biosynthesis. Its function is as follows. Cell wall formation. This Streptococcus pneumoniae (strain JJA) protein is UDP-N-acetylenolpyruvoylglucosamine reductase.